Reading from the N-terminus, the 337-residue chain is tRNA N6-adenosine threonylcarbamoyltransferase (337 aa).

2 residues coordinate Fe cation: H111 and H115. Residues 134–138 (LVSGG), D167, G180, and N272 each bind substrate. Residue D300 participates in Fe cation binding.

Belongs to the KAE1 / TsaD family. Requires Fe(2+) as cofactor.

Its subcellular location is the cytoplasm. It carries out the reaction L-threonylcarbamoyladenylate + adenosine(37) in tRNA = N(6)-L-threonylcarbamoyladenosine(37) in tRNA + AMP + H(+). Its function is as follows. Required for the formation of a threonylcarbamoyl group on adenosine at position 37 (t(6)A37) in tRNAs that read codons beginning with adenine. Is involved in the transfer of the threonylcarbamoyl moiety of threonylcarbamoyl-AMP (TC-AMP) to the N6 group of A37, together with TsaE and TsaB. TsaD likely plays a direct catalytic role in this reaction. This Pectobacterium atrosepticum (strain SCRI 1043 / ATCC BAA-672) (Erwinia carotovora subsp. atroseptica) protein is tRNA N6-adenosine threonylcarbamoyltransferase.